Consider the following 330-residue polypeptide: Glycerol-3-phosphate dehydrogenase [NAD(P)+] (330 aa).

NADPH contacts are provided by S10, W11, R31, and K104. Positions 104, 131, and 133 each coordinate sn-glycerol 3-phosphate. A135 lines the NADPH pocket. Residues K186, D239, S249, R250, and N251 each contribute to the sn-glycerol 3-phosphate site. K186 acts as the Proton acceptor in catalysis. R250 lines the NADPH pocket. Positions 274 and 276 each coordinate NADPH.

Belongs to the NAD-dependent glycerol-3-phosphate dehydrogenase family.

Its subcellular location is the cytoplasm. It carries out the reaction sn-glycerol 3-phosphate + NAD(+) = dihydroxyacetone phosphate + NADH + H(+). The enzyme catalyses sn-glycerol 3-phosphate + NADP(+) = dihydroxyacetone phosphate + NADPH + H(+). The protein operates within membrane lipid metabolism; glycerophospholipid metabolism. Functionally, catalyzes the reduction of the glycolytic intermediate dihydroxyacetone phosphate (DHAP) to sn-glycerol 3-phosphate (G3P), the key precursor for phospholipid synthesis. The sequence is that of Glycerol-3-phosphate dehydrogenase [NAD(P)+] from Thermoanaerobacter sp. (strain X514).